The chain runs to 398 residues: Cathepsin D (398 aa).

The N-terminal stretch at 1-20 (MAPRGLLVLLLLALVGPCAA) is a signal peptide. Positions 21 to 63 (LIRIPLTKFTSTRRMLTEVGSEIPDMNAITQFLKFKLGFADLA) are cleaved as a propeptide — activation peptide. In terms of domain architecture, Peptidase A1 spans 78-395 (YYGEIGIGTP…DRDNDSVGFA (318 aa)). The active site involves D96. C109 and C116 form a disulfide bridge. N-linked (GlcNAc...) asparagine glycosylation is found at N133 and N251. C274 and C278 are oxidised to a cystine. D283 is a catalytic residue. C317 and C354 are oxidised to a cystine.

The protein belongs to the peptidase A1 family. In terms of assembly, consists of a light chain and a heavy chain. Oocytic yolk, preovulatory follicles, liver.

The protein resides in the lysosome. It carries out the reaction Specificity similar to, but narrower than, that of pepsin A. Does not cleave the 4-Gln-|-His-5 bond in B chain of insulin.. Its function is as follows. Acid protease active in intracellular protein breakdown. In chicken it is a key enzyme for yolk formation as it is capable of catalyzing intra oocytic break down of protein components of both vitellogenin and VLDL. The chain is Cathepsin D (CTSD) from Gallus gallus (Chicken).